Here is a 591-residue protein sequence, read N- to C-terminus: Aspartate--tRNA(Asp/Asn) ligase (591 aa).

Residue Glu-174 participates in L-aspartate binding. Positions 198–201 are aspartate; sequence QLFK. Arg-220 contacts L-aspartate. ATP contacts are provided by residues 220–222 and Gln-229; that span reads RDE. His-450 contacts L-aspartate. ATP is bound at residue Glu-483. Arg-490 serves as a coordination point for L-aspartate. 535 to 538 contacts ATP; sequence GLDR.

This sequence belongs to the class-II aminoacyl-tRNA synthetase family. Type 1 subfamily. As to quaternary structure, homodimer.

It localises to the cytoplasm. The enzyme catalyses tRNA(Asx) + L-aspartate + ATP = L-aspartyl-tRNA(Asx) + AMP + diphosphate. Functionally, aspartyl-tRNA synthetase with relaxed tRNA specificity since it is able to aspartylate not only its cognate tRNA(Asp) but also tRNA(Asn). Reaction proceeds in two steps: L-aspartate is first activated by ATP to form Asp-AMP and then transferred to the acceptor end of tRNA(Asp/Asn). This chain is Aspartate--tRNA(Asp/Asn) ligase, found in Pseudomonas putida (strain ATCC 700007 / DSM 6899 / JCM 31910 / BCRC 17059 / LMG 24140 / F1).